The chain runs to 488 residues: ATP synthase subunit beta, chloroplastic (488 aa).

ATP is bound at residue 170-177 (GGAGVGKT).

The protein belongs to the ATPase alpha/beta chains family. In terms of assembly, F-type ATPases have 2 components, CF(1) - the catalytic core - and CF(0) - the membrane proton channel. CF(1) has five subunits: alpha(3), beta(3), gamma(1), delta(1), epsilon(1). CF(0) has four main subunits: a(1), b(1), b'(1) and c(9-12).

It is found in the plastid. The protein resides in the chloroplast thylakoid membrane. It carries out the reaction ATP + H2O + 4 H(+)(in) = ADP + phosphate + 5 H(+)(out). Functionally, produces ATP from ADP in the presence of a proton gradient across the membrane. The catalytic sites are hosted primarily by the beta subunits. The sequence is that of ATP synthase subunit beta, chloroplastic from Picea abies (Norway spruce).